A 549-amino-acid polypeptide reads, in one-letter code: Glucose-6-phosphate isomerase (549 aa).

Catalysis depends on Glu355, which acts as the Proton donor. Catalysis depends on residues His386 and Lys514.

It belongs to the GPI family.

It is found in the cytoplasm. It carries out the reaction alpha-D-glucose 6-phosphate = beta-D-fructose 6-phosphate. The protein operates within carbohydrate biosynthesis; gluconeogenesis. It functions in the pathway carbohydrate degradation; glycolysis; D-glyceraldehyde 3-phosphate and glycerone phosphate from D-glucose: step 2/4. Its function is as follows. Catalyzes the reversible isomerization of glucose-6-phosphate to fructose-6-phosphate. In Sodalis glossinidius (strain morsitans), this protein is Glucose-6-phosphate isomerase.